The sequence spans 915 residues: Nitrate reductase [NADH] (915 aa).

The segment at 1–102 (MAASVEPRQP…PRDEGTADAW (102 aa)) is disordered. Residues 16–26 (APATAPTARAP) show a composition bias toward low complexity. The segment covering 57-71 (AEEEEDDDDEDDEGH) has biased composition (acidic residues). Basic and acidic residues predominate over residues 88-97 (PSTRDPRDEG). Cys-189 serves as a coordination point for Mo-molybdopterin. One can recognise a Cytochrome b5 heme-binding domain in the interval 538-613 (DKQFTMSEVR…LDTYRIGELI (76 aa)). Heme is bound by residues His-573 and His-596. The region spanning 654-767 (REKVPCRLVD…KGPLGHVEYT (114 aa)) is the FAD-binding FR-type domain. FAD-binding positions include 706–709 (RAYT), 723–727 (LVKVY), Phe-728, Phe-735, 740–742 (LMT), Ser-791, and Thr-794.

Belongs to the nitrate reductase family. As to quaternary structure, homodimer. It depends on FAD as a cofactor. Heme is required as a cofactor. Mo-molybdopterin serves as cofactor.

The catalysed reaction is nitrite + NAD(+) + H2O = nitrate + NADH + H(+). Nitrate reductase is a key enzyme involved in the first step of nitrate assimilation in plants, fungi and bacteria. The sequence is that of Nitrate reductase [NADH] from Hordeum vulgare (Barley).